The sequence spans 87 residues: UPF0367 protein P9303_26451 (87 aa).

This sequence belongs to the UPF0367 family.

The polypeptide is UPF0367 protein P9303_26451 (Prochlorococcus marinus (strain MIT 9303)).